A 252-amino-acid chain; its full sequence is 5-oxoprolinase subunit A (252 aa).

Belongs to the LamB/PxpA family. In terms of assembly, forms a complex composed of PxpA, PxpB and PxpC.

It carries out the reaction 5-oxo-L-proline + ATP + 2 H2O = L-glutamate + ADP + phosphate + H(+). Catalyzes the cleavage of 5-oxoproline to form L-glutamate coupled to the hydrolysis of ATP to ADP and inorganic phosphate. This is 5-oxoprolinase subunit A from Staphylococcus carnosus (strain TM300).